The sequence spans 340 residues: Short-chain dehydrogenase/reductase prx1 (340 aa).

5 residues coordinate NADP(+): isoleucine 60, lysine 84, aspartate 104, asparagine 131, and lysine 162. Serine 184 acts as the Proton donor in catalysis. The NADP(+) site is built by tyrosine 210 and lysine 214. The active-site Proton acceptor is tyrosine 210. The active-site Lowers pKa of active site Tyr is lysine 214.

The protein belongs to the short-chain dehydrogenases/reductases (SDR) family.

It participates in sesquiterpene biosynthesis. Short-chain dehydrogenase/reductase; part of the gene cluster that mediates the biosynthesis of PR-toxin, a bicyclic sesquiterpene belonging to the eremophilane class and acting as a mycotoxin. The first step of the pathway is catalyzed by the aristolochene synthase which performs the cyclization of trans,trans-farnesyl diphosphate (FPP) to the bicyclic sesquiterpene aristolochene. Following the formation of aristolochene, the non-oxygenated aristolochene is converted to the trioxygenated intermediate eremofortin B, via 7-epi-neopetasone. This conversion appears to involve three enzymes, a hydroxysterol oxidase-like enzyme, the quinone-oxidase prx3 that forms the quinone-type-structure in the bicyclic nucleus of aristolochene with the C8-oxo group and the C-3 hydroxyl group, and the P450 monooxygenase prx9 that introduces the epoxide at the double bond between carbons 1 and 2. No monoxy or dioxy-intermediates have been reported to be released to the broth, so these three early oxidative reactions may be coupled together. Eremofortin B is further oxidized by another P450 monooxygenase, that introduces a second epoxide between carbons 7 and 11 prior to acetylation to eremofortin A by the acetyltransferase prx11. The second epoxidation may be performed by a second P450 monooxygenase. After the acetylation step, eremofortin A is converted to eremofortin C and then to PR-toxin. First the conversion of eremofortin A to eremofortin C proceeds by oxidation of the side chain of the molecule at C-12 and is catalyzed by the short-chain oxidoreductase prx1. The cytochrome P450 monooxygenase prx8 also plays a role in this step. The primary alcohol formed at C-12 is finally oxidized by the short-chain alcohol dehydrogenase prx4 that forms PR-toxin. This Penicillium rubens (strain ATCC 28089 / DSM 1075 / NRRL 1951 / Wisconsin 54-1255) (Penicillium chrysogenum) protein is Short-chain dehydrogenase/reductase prx1.